The chain runs to 191 residues: HTH-type transcriptional regulator YjdC (191 aa).

An HTH tetR-type domain is found at 1-60; sequence MQREDVLGEALKLLELQGIANTTLEMVAERVDYPLDELRRFWPDKEAILYDALRYLSQQI.

This chain is HTH-type transcriptional regulator YjdC (yjdC), found in Escherichia coli (strain K12).